The chain runs to 158 residues: MKCPYCGFEESKVVDSRSTEDHKAIRRRRECLKCNRRYTTYEKIEDIPVLVIKRDSNREYFDKTKIINGLVKACQKRPISRVQIDSIADEIEKKMNNDMLTEVKSEYIGELIMEKLKEIDEVSYVRFASVYRQFKDINTFIEEITNLMSDKHIGKIKK.

The segment at 3-34 (CPYCGFEESKVVDSRSTEDHKAIRRRRECLKC) is a zinc-finger region. The ATP-cone domain occupies 49–139 (VLVIKRDSNR…VYRQFKDINT (91 aa)).

Belongs to the NrdR family. Zn(2+) serves as cofactor.

In terms of biological role, negatively regulates transcription of bacterial ribonucleotide reductase nrd genes and operons by binding to NrdR-boxes. The protein is Transcriptional repressor NrdR of Clostridium novyi (strain NT).